A 466-amino-acid chain; its full sequence is Cytochrome P450 85A1 (466 aa).

A helical membrane pass occupies residues 1–21 (MVLAVLIGVLVGIVLVSSLLL). Cysteine 416 serves as a coordination point for heme.

It belongs to the cytochrome P450 family. Requires heme as cofactor.

It localises to the membrane. The enzyme catalyses 6-deoxoteasterone + reduced [NADPH--hemoprotein reductase] + O2 = 6alpha-hydroxyteasterone + oxidized [NADPH--hemoprotein reductase] + H2O + H(+). The catalysed reaction is 6alpha-hydroxytyphasterol + reduced [NADPH--hemoprotein reductase] + O2 = teasterone + oxidized [NADPH--hemoprotein reductase] + 2 H2O + H(+). It catalyses the reaction 3-dehydro-6-deoxoteasterone + reduced [NADPH--hemoprotein reductase] + O2 = 3-dehydro-6alpha-hydroxyteasterone + oxidized [NADPH--hemoprotein reductase] + H2O + H(+). It carries out the reaction 3-dehydro-6alpha-hydroxyteasterone + reduced [NADPH--hemoprotein reductase] + O2 = 3-dehydroteasterone + oxidized [NADPH--hemoprotein reductase] + 2 H2O + H(+). The enzyme catalyses 6-deoxotyphasterol + reduced [NADPH--hemoprotein reductase] + O2 = 6alpha-hydroxytyphasterol + oxidized [NADPH--hemoprotein reductase] + H2O + H(+). The catalysed reaction is 6alpha-hydroxytyphasterol + reduced [NADPH--hemoprotein reductase] + O2 = typhasterol + oxidized [NADPH--hemoprotein reductase] + 2 H2O + H(+). It catalyses the reaction 6-deoxocastasterone + reduced [NADPH--hemoprotein reductase] + O2 = 6alpha-hydroxycastasterone + oxidized [NADPH--hemoprotein reductase] + H2O + H(+). It carries out the reaction 6alpha-hydroxycastasterone + reduced [NADPH--hemoprotein reductase] + O2 = castasterone + oxidized [NADPH--hemoprotein reductase] + 2 H2O + H(+). The enzyme catalyses 3-dehydro-6-deoxoteasterone + 2 reduced [NADPH--hemoprotein reductase] + 2 O2 = 3-dehydroteasterone + 2 oxidized [NADPH--hemoprotein reductase] + 3 H2O + 2 H(+). The catalysed reaction is 6-deoxocastasterone + 2 reduced [NADPH--hemoprotein reductase] + 2 O2 = castasterone + 2 oxidized [NADPH--hemoprotein reductase] + 3 H2O + 2 H(+). It catalyses the reaction 6-deoxoteasterone + 2 reduced [NADPH--hemoprotein reductase] + 2 O2 = teasterone + 2 oxidized [NADPH--hemoprotein reductase] + 3 H2O + 2 H(+). It carries out the reaction 6-deoxotyphasterol + 2 reduced [NADPH--hemoprotein reductase] + 2 O2 = typhasterol + 2 oxidized [NADPH--hemoprotein reductase] + 3 H2O + 2 H(+). It participates in plant hormone biosynthesis; brassinosteroid biosynthesis. Its function is as follows. Involved in reduction steps of the biosynthesis of plant campesterol-derivative steroids, ending to castasterone (CS) but missing brassinolide (BL). Catalyzes the C6-oxidation step in brassinosteroids biosynthesis; the conversion of 6-deoxoteasterone (6-deoxoTE) to teasterone (TE), 3-dehydro-6-deoxoteasterone (6-deoxo3DT, 6-deoxo-3-DHT) to 3-dehydroteasterone (3DT, 3-DHT), 6-deoxotyphasterol (6-deoxoTY) to typhasterol (TY) and of 6-deoxocastasterone (6-deoxoCS) to castasterone (CS). The chain is Cytochrome P450 85A1 from Brachypodium distachyon (Purple false brome).